A 129-amino-acid chain; its full sequence is Ribosome-binding factor A (129 aa).

This sequence belongs to the RbfA family. In terms of assembly, monomer. Binds 30S ribosomal subunits, but not 50S ribosomal subunits or 70S ribosomes.

The protein localises to the cytoplasm. Functionally, one of several proteins that assist in the late maturation steps of the functional core of the 30S ribosomal subunit. Associates with free 30S ribosomal subunits (but not with 30S subunits that are part of 70S ribosomes or polysomes). Required for efficient processing of 16S rRNA. May interact with the 5'-terminal helix region of 16S rRNA. The polypeptide is Ribosome-binding factor A (Pseudomonas aeruginosa (strain UCBPP-PA14)).